A 152-amino-acid chain; its full sequence is Male-specific protein scotti (152 aa).

The protein belongs to the male-specific scotti family.

Post-meiotically transcribed gene that has a role in late spermiogenesis; required for actin cone progression during spermatid individualization. This Drosophila mojavensis (Fruit fly) protein is Male-specific protein scotti.